A 252-amino-acid polypeptide reads, in one-letter code: MNVKVYNLDGSEKGDIELPAVFETEYRPDLIKRAVISSLTAKLQPKGCDAFAGYRTSAKSIGKGHGKARVRRTAQGAGAFVPQAVGGRRAHPPKVEKILFERINRKEKLKALASAIAASAIPEIVSARGHKIEGVPSLPLVVNADFESLAKTKEVLEVFKTLKLDADLARAKDGIKIKAGRAKLRGRKYKKPKSVLVVVGDACEAIAASRNLAGVDVITANDLSAIHIAPGTMAGRLTLWTENAIEKINGRF.

Belongs to the universal ribosomal protein uL4 family. In terms of assembly, part of the 50S ribosomal subunit.

Functionally, one of the primary rRNA binding proteins, this protein initially binds near the 5'-end of the 23S rRNA. It is important during the early stages of 50S assembly. It makes multiple contacts with different domains of the 23S rRNA in the assembled 50S subunit and ribosome. Forms part of the polypeptide exit tunnel. The protein is Large ribosomal subunit protein uL4 of Methanococcus maripaludis (strain C7 / ATCC BAA-1331).